The following is a 202-amino-acid chain: Urease accessory protein UreG (202 aa).

11-18 (GPVGSGKT) is a binding site for GTP.

Belongs to the SIMIBI class G3E GTPase family. UreG subfamily. Homodimer. UreD, UreF and UreG form a complex that acts as a GTP-hydrolysis-dependent molecular chaperone, activating the urease apoprotein by helping to assemble the nickel containing metallocenter of UreC. The UreE protein probably delivers the nickel.

Its subcellular location is the cytoplasm. In terms of biological role, facilitates the functional incorporation of the urease nickel metallocenter. This process requires GTP hydrolysis, probably effectuated by UreG. The chain is Urease accessory protein UreG from Magnetococcus marinus (strain ATCC BAA-1437 / JCM 17883 / MC-1).